A 352-amino-acid chain; its full sequence is N-acetyl-gamma-glutamyl-phosphate reductase (352 aa).

The active site involves cysteine 155.

The protein belongs to the NAGSA dehydrogenase family. Type 1 subfamily.

It localises to the cytoplasm. It catalyses the reaction N-acetyl-L-glutamate 5-semialdehyde + phosphate + NADP(+) = N-acetyl-L-glutamyl 5-phosphate + NADPH + H(+). It functions in the pathway amino-acid biosynthesis; L-arginine biosynthesis; N(2)-acetyl-L-ornithine from L-glutamate: step 3/4. In terms of biological role, catalyzes the NADPH-dependent reduction of N-acetyl-5-glutamyl phosphate to yield N-acetyl-L-glutamate 5-semialdehyde. The chain is N-acetyl-gamma-glutamyl-phosphate reductase from Synechococcus elongatus (strain ATCC 33912 / PCC 7942 / FACHB-805) (Anacystis nidulans R2).